A 335-amino-acid polypeptide reads, in one-letter code: Large ribosomal subunit protein uL3 (335 aa).

Disordered stretches follow at residues 1-35 (MPQPNRPRKGSMGFSPRKRAESEVPRFNSWPADDG), 234-256 (IGNLGPWNPSRVRSTVPQQGQTG), and 312-335 (AVRPNESPRLDPEVRYVSTASNQG). The span at 244-256 (RVRSTVPQQGQTG) shows a compositional bias: polar residues.

The protein belongs to the universal ribosomal protein uL3 family. Part of the 50S ribosomal subunit. Forms a cluster with proteins L14 and L24e.

One of the primary rRNA binding proteins, it binds directly near the 3'-end of the 23S rRNA, where it nucleates assembly of the 50S subunit. This is Large ribosomal subunit protein uL3 from Halobacterium salinarum (strain ATCC 29341 / DSM 671 / R1).